Consider the following 964-residue polypeptide: Reticulon-3 (964 aa).

A compositionally biased stretch (low complexity) spans 1-24 (MAESSAATQSPSVSSSSSGAEPSA). Disordered stretches follow at residues 1–32 (MAESSAATQSPSVSSSSSGAEPSALGGGGGSP), 68–109 (AGLS…SETL), and 179–200 (WVVKDQEPKNPNKVPDGEDRSA). Position 2 is an N-acetylalanine (Ala-2). Topologically, residues 2 to 795 (AESSAATQSP…KKTGFVFGTT (794 aa)) are cytoplasmic. At Ser-31 the chain carries Phosphoserine. The span at 80–91 (SKSMTSSFLSSS) shows a compositional bias: low complexity. A phosphoserine mark is found at Ser-217, Ser-225, Ser-230, Ser-233, Ser-270, Ser-303, and Ser-429. Positions 479-536 (ITEKPDSLPSAAAKTSEREIKETPSRETVRSEMCENSEQPQAQPETPTQKSLEGEVAS) are disordered. Residues 493–511 (TSEREIKETPSRETVRSEM) are compositionally biased toward basic and acidic residues. The segment covering 516 to 527 (EQPQAQPETPTQ) has biased composition (low complexity). Ser-529 carries the phosphoserine modification. At Thr-593 the chain carries Phosphothreonine. Ser-596, Ser-597, and Ser-673 each carry phosphoserine. Disordered regions lie at residues 645–674 (ELSGSETKNIKSKYSEDSRETTGGAPTMSP) and 697–723 (VQDEGISSGGKLKQTFAPQSGPQSSSD). Residues 712–723 (FAPQSGPQSSSD) are compositionally biased toward polar residues. The region spanning 776-964 (VHDLIFWRDV…LPGIAKKKAE (189 aa)) is the Reticulon domain. Residues 796 to 819 (LIMLLSLAAFSVISVVSYLILALL) constitute an intramembrane region (helical). Over 820 to 876 (SVTISFRVYKSVIQAVQKSEEGHPFKAYLDVDITLSSEAFHNYMNAAMVHVNKALKL) the chain is Cytoplasmic. Residues 877–899 (IIRLFLVEDLVDSLKLAVFMWLM) constitute an intramembrane region (helical). Residues 900-903 (TYVG) lie on the Cytoplasmic side of the membrane. The helical intramembrane region spans 904–926 (AVFNGITLLILAELLVFSVPIVY). Residues 919-964 (VFSVPIVYEKYKTQIDHYVGIARDQTKSIVEKIQAKLPGIAKKKAE) form an interaction with FADD region. The Cytoplasmic portion of the chain corresponds to 927 to 964 (EKYKTQIDHYVGIARDQTKSIVEKIQAKLPGIAKKKAE). Positions 932 to 934 (QID) are interaction with BACE1.

Homodimer. Interacts with RTN4. Isoform 3 interacts with BACE1, BACE2, BCL2 and FADD. Interacts with ATL1 and ATL2. Isoform 3 interacts with TMEM33. Interacts with ZFYVE27 and with KIF5A in a ZFYVE27-dependent manner. Interacts with RIGI. Interacts with TRIM25. In terms of tissue distribution, isoform 1, isoform 3, isoform 4 and isoform 5 are expressed in spinal cord. Isoform 1 is present in brain, where it is expressed in the neurons of cerebral cortex, hippocampus, hypothalamus and cerebellum (at protein level).

Its subcellular location is the endoplasmic reticulum membrane. It is found in the golgi apparatus membrane. May be involved in membrane trafficking in the early secretory pathway. Inhibits BACE1 activity and amyloid precursor protein processing. May induce caspase-8 cascade and apoptosis. May favor BCL2 translocation to the mitochondria upon endoplasmic reticulum stress. Induces the formation of endoplasmic reticulum tubules. Also acts as an inflammation-resolving regulator by interacting with both TRIM25 and RIGI, subsequently impairing RIGI 'Lys-63'-linked polyubiquitination leading to IRF3 and NF-kappa-B inhibition. This chain is Reticulon-3 (Rtn3), found in Mus musculus (Mouse).